Here is a 203-residue protein sequence, read N- to C-terminus: Holliday junction branch migration complex subunit RuvA (203 aa).

The tract at residues 1 to 64 is domain I; the sequence is MIGRLRGIII…EDAQLLYGFN (64 aa). The interval 65–142 is domain II; it reads NKQERTLFKE…KGLHGDLFTP (78 aa). A flexible linker region spans residues 143-154; it reads AADLVLTSPASP. The segment at 155–203 is domain III; it reads ATDDAEQEAVAALVALGYKPQEASRMVSKIARPDTSSETLIREALRAAL.

This sequence belongs to the RuvA family. As to quaternary structure, homotetramer. Forms an RuvA(8)-RuvB(12)-Holliday junction (HJ) complex. HJ DNA is sandwiched between 2 RuvA tetramers; dsDNA enters through RuvA and exits via RuvB. An RuvB hexamer assembles on each DNA strand where it exits the tetramer. Each RuvB hexamer is contacted by two RuvA subunits (via domain III) on 2 adjacent RuvB subunits; this complex drives branch migration. In the full resolvosome a probable DNA-RuvA(4)-RuvB(12)-RuvC(2) complex forms which resolves the HJ.

The protein resides in the cytoplasm. Functionally, the RuvA-RuvB-RuvC complex processes Holliday junction (HJ) DNA during genetic recombination and DNA repair, while the RuvA-RuvB complex plays an important role in the rescue of blocked DNA replication forks via replication fork reversal (RFR). RuvA specifically binds to HJ cruciform DNA, conferring on it an open structure. The RuvB hexamer acts as an ATP-dependent pump, pulling dsDNA into and through the RuvAB complex. HJ branch migration allows RuvC to scan DNA until it finds its consensus sequence, where it cleaves and resolves the cruciform DNA. The polypeptide is Holliday junction branch migration complex subunit RuvA (Shigella flexneri serotype 5b (strain 8401)).